Consider the following 556-residue polypeptide: Undecaprenyl phosphate-alpha-4-amino-4-deoxy-L-arabinose arabinosyl transferase (556 aa).

Helical transmembrane passes span 88–108 (FASVFSTALSALLVFWLAMML), 116–136 (LLAATIYLTSLLVYGIGTYSV), 179–199 (FMTKGFLALALPVISVLPVAL), 207–227 (LLLFGPLAIVVAVLLSAPWAL), 258–278 (APFWYYLPFLIVGTFPWLALL), 296–316 (FFLLCWMVMPLLFFSIAKGKL), 319–339 (YILPCFAPLALLMAAWISGLA), 355–375 (IVFGGVLGLAVAALGLGIIVP), 384–404 (LTIISGIVCFIGWIAFAAVSL), and 410–430 (WGYLVAGCPLFLALLVGGSIP).

This sequence belongs to the glycosyltransferase 83 family.

The protein resides in the cell inner membrane. The enzyme catalyses 4-amino-4-deoxy-alpha-L-arabinopyranosyl di-trans,octa-cis-undecaprenyl phosphate + lipid IVA = lipid IIA + di-trans,octa-cis-undecaprenyl phosphate.. It functions in the pathway lipopolysaccharide metabolism; 4-amino-4-deoxy-beta-L-arabinose-lipid A biosynthesis. Its function is as follows. Catalyzes the transfer of the L-Ara4N moiety of the glycolipid undecaprenyl phosphate-alpha-L-Ara4N to lipid A. The modified arabinose is attached to lipid A and is required for resistance to polymyxin and cationic antimicrobial peptides. The polypeptide is Undecaprenyl phosphate-alpha-4-amino-4-deoxy-L-arabinose arabinosyl transferase (Pectobacterium atrosepticum (strain SCRI 1043 / ATCC BAA-672) (Erwinia carotovora subsp. atroseptica)).